The sequence spans 337 residues: UDP-3-O-acylglucosamine N-acyltransferase (337 aa).

His238 serves as the catalytic Proton acceptor.

The protein belongs to the transferase hexapeptide repeat family. LpxD subfamily. Homotrimer.

The enzyme catalyses a UDP-3-O-[(3R)-3-hydroxyacyl]-alpha-D-glucosamine + a (3R)-hydroxyacyl-[ACP] = a UDP-2-N,3-O-bis[(3R)-3-hydroxyacyl]-alpha-D-glucosamine + holo-[ACP] + H(+). The protein operates within bacterial outer membrane biogenesis; LPS lipid A biosynthesis. Catalyzes the N-acylation of UDP-3-O-acylglucosamine using 3-hydroxyacyl-ACP as the acyl donor. Is involved in the biosynthesis of lipid A, a phosphorylated glycolipid that anchors the lipopolysaccharide to the outer membrane of the cell. The polypeptide is UDP-3-O-acylglucosamine N-acyltransferase (Xanthomonas campestris pv. campestris (strain 8004)).